Reading from the N-terminus, the 264-residue chain is Glutamate 5-kinase (264 aa).

Position 15 (K15) interacts with ATP. 3 residues coordinate substrate: S55, D142, and N154. ATP contacts are provided by residues 174–175 (SD) and 216–222 (TGGIATK).

Belongs to the glutamate 5-kinase family.

The protein resides in the cytoplasm. It catalyses the reaction L-glutamate + ATP = L-glutamyl 5-phosphate + ADP. Its pathway is amino-acid biosynthesis; L-proline biosynthesis; L-glutamate 5-semialdehyde from L-glutamate: step 1/2. Functionally, catalyzes the transfer of a phosphate group to glutamate to form L-glutamate 5-phosphate. In Alkaliphilus metalliredigens (strain QYMF), this protein is Glutamate 5-kinase.